The chain runs to 73 residues: U-scoloptoxin(22)-Cw1a (73 aa).

The first 24 residues, 1–24 (MRRFVFLAFVLVLFVIANLDSSSA), serve as a signal peptide directing secretion.

The protein belongs to the scoloptoxin-22 family. Contains 1 disulfide bond. As to expression, expressed by the venom gland.

The protein localises to the secreted. This chain is U-scoloptoxin(22)-Cw1a, found in Cormocephalus westwoodi (Westwood's green centipede).